Reading from the N-terminus, the 159-residue chain is Transcriptional repressor NrdR (159 aa).

The segment at 3 to 34 (CPFCRHDDTQVVDSRVSEDGAAIRRRRRCSAC) is a zinc-finger region. The ATP-cone domain maps to 49–139 (PFVVKKDGSR…VYRRFEDVSE (91 aa)).

This sequence belongs to the NrdR family. Zn(2+) serves as cofactor.

Its function is as follows. Negatively regulates transcription of bacterial ribonucleotide reductase nrd genes and operons by binding to NrdR-boxes. The polypeptide is Transcriptional repressor NrdR (Burkholderia cenocepacia (strain ATCC BAA-245 / DSM 16553 / LMG 16656 / NCTC 13227 / J2315 / CF5610) (Burkholderia cepacia (strain J2315))).